A 451-amino-acid polypeptide reads, in one-letter code: UDP-N-acetylmuramate--L-alanine ligase (451 aa).

110–116 contributes to the ATP binding site; it reads GTHGKTT.

It belongs to the MurCDEF family.

It is found in the cytoplasm. The catalysed reaction is UDP-N-acetyl-alpha-D-muramate + L-alanine + ATP = UDP-N-acetyl-alpha-D-muramoyl-L-alanine + ADP + phosphate + H(+). Its pathway is cell wall biogenesis; peptidoglycan biosynthesis. Cell wall formation. This chain is UDP-N-acetylmuramate--L-alanine ligase, found in Francisella tularensis subsp. novicida (strain U112).